Here is a 311-residue protein sequence, read N- to C-terminus: Malate dehydrogenase (311 aa).

NAD(+) is bound by residues 7–13 and Asp34; that span reads GAAGGIG. Residues Arg81 and Arg87 each coordinate substrate. NAD(+) is bound by residues Asn94 and 117-119; that span reads ITN. The substrate site is built by Asn119 and Arg153. The Proton acceptor role is filled by His177. Met227 lines the NAD(+) pocket.

It belongs to the LDH/MDH superfamily. MDH type 1 family. Homodimer.

It carries out the reaction (S)-malate + NAD(+) = oxaloacetate + NADH + H(+). Functionally, catalyzes the reversible oxidation of malate to oxaloacetate. In Shewanella piezotolerans (strain WP3 / JCM 13877), this protein is Malate dehydrogenase.